Consider the following 257-residue polypeptide: Type III pantothenate kinase (257 aa).

An ATP-binding site is contributed by Asp6–Val13. Gly108–Arg111 lines the substrate pocket. Residue Asp110 is the Proton acceptor of the active site. Asp130 is a K(+) binding site. Residue Thr133 coordinates ATP. Position 185 (Thr185) interacts with substrate.

It belongs to the type III pantothenate kinase family. In terms of assembly, homodimer. NH4(+) serves as cofactor. K(+) is required as a cofactor.

It is found in the cytoplasm. The enzyme catalyses (R)-pantothenate + ATP = (R)-4'-phosphopantothenate + ADP + H(+). The protein operates within cofactor biosynthesis; coenzyme A biosynthesis; CoA from (R)-pantothenate: step 1/5. Its function is as follows. Catalyzes the phosphorylation of pantothenate (Pan), the first step in CoA biosynthesis. In Rhodospirillum rubrum (strain ATCC 11170 / ATH 1.1.1 / DSM 467 / LMG 4362 / NCIMB 8255 / S1), this protein is Type III pantothenate kinase.